Reading from the N-terminus, the 276-residue chain is Large ribosomal subunit protein uL2 (276 aa).

The segment at 224 to 258 (VAMNPVDHPHGGGEGRTGEGRVPVSPWGTPTKGYR) is disordered. Over residues 230-242 (DHPHGGGEGRTGE) the composition is skewed to basic and acidic residues.

The protein belongs to the universal ribosomal protein uL2 family. In terms of assembly, part of the 50S ribosomal subunit. Forms a bridge to the 30S subunit in the 70S ribosome.

In terms of biological role, one of the primary rRNA binding proteins. Required for association of the 30S and 50S subunits to form the 70S ribosome, for tRNA binding and peptide bond formation. It has been suggested to have peptidyltransferase activity; this is somewhat controversial. Makes several contacts with the 16S rRNA in the 70S ribosome. This chain is Large ribosomal subunit protein uL2, found in Polynucleobacter necessarius subsp. necessarius (strain STIR1).